We begin with the raw amino-acid sequence, 438 residues long: DNA primase DnaG (438 aa).

One can recognise a Toprim domain in the interval 171–245; sequence DAILVVEGRA…DIDYVARAPE (75 aa). Residues glutamate 177, aspartate 219, and aspartate 221 each coordinate Mg(2+).

It belongs to the archaeal DnaG primase family. Forms a ternary complex with MCM helicase and DNA. Component of the archaeal exosome complex. Mg(2+) is required as a cofactor.

It catalyses the reaction ssDNA + n NTP = ssDNA/pppN(pN)n-1 hybrid + (n-1) diphosphate.. In terms of biological role, RNA polymerase that catalyzes the synthesis of short RNA molecules used as primers for DNA polymerase during DNA replication. Also part of the exosome, which is a complex involved in RNA degradation. Acts as a poly(A)-binding protein that enhances the interaction between heteromeric, adenine-rich transcripts and the exosome. This Methanothrix thermoacetophila (strain DSM 6194 / JCM 14653 / NBRC 101360 / PT) (Methanosaeta thermophila) protein is DNA primase DnaG.